A 234-amino-acid chain; its full sequence is Interleukin-34 (234 aa).

Residues 1–20 (MPWGLAWLYCLGILLDVALG) form the signal peptide. N-linked (GlcNAc...) asparagine glycosylation is present at Asn99. Residues 215–234 (PRQPPTSLPRSPSSNHGPLP) form a disordered region. Residues 222–234 (LPRSPSSNHGPLP) are compositionally biased toward polar residues.

It belongs to the IL-34 family. As to quaternary structure, homodimer. Interacts with CSF1R.

The protein resides in the secreted. Its function is as follows. Cytokine that promotes the proliferation, survival and differentiation of monocytes and macrophages. Promotes the release of pro-inflammatory chemokines, and thereby plays an important role in innate immunity and in inflammatory processes. Plays an important role in the regulation of osteoclast proliferation and differentiation, and in the regulation of bone resorption. Signaling via CSF1R and its downstream effectors stimulates phosphorylation of MAPK1/ERK2 AND MAPK3/ERK1. This chain is Interleukin-34 (Il34), found in Rattus norvegicus (Rat).